The primary structure comprises 602 residues: Elongation factor 4 (602 aa).

The tr-type G domain occupies 7-189 (KYIRNFSIVA…AIVNKVPAPD (183 aa)). Residues 19–24 (DHGKST) and 136–139 (NKID) contribute to the GTP site.

Belongs to the TRAFAC class translation factor GTPase superfamily. Classic translation factor GTPase family. LepA subfamily.

Its subcellular location is the cell membrane. It catalyses the reaction GTP + H2O = GDP + phosphate + H(+). Its function is as follows. Required for accurate and efficient protein synthesis under certain stress conditions. May act as a fidelity factor of the translation reaction, by catalyzing a one-codon backward translocation of tRNAs on improperly translocated ribosomes. Back-translocation proceeds from a post-translocation (POST) complex to a pre-translocation (PRE) complex, thus giving elongation factor G a second chance to translocate the tRNAs correctly. Binds to ribosomes in a GTP-dependent manner. The polypeptide is Elongation factor 4 (Clostridium botulinum (strain Kyoto / Type A2)).